A 46-amino-acid polypeptide reads, in one-letter code: Endochitinase 2 (46 aa).

The protein belongs to the glycosyl hydrolase 19 family. Chitinase class I subfamily.

The catalysed reaction is Random endo-hydrolysis of N-acetyl-beta-D-glucosaminide (1-&gt;4)-beta-linkages in chitin and chitodextrins.. Functionally, defense against chitin-containing fungal and bacterial pathogens. In Arachis hypogaea (Peanut), this protein is Endochitinase 2.